Consider the following 195-residue polypeptide: Protein LIGHT-DEPENDENT SHORT HYPOCOTYLS 7 (195 aa).

2 disordered regions span residues 1-41 (MASH…LSRY) and 154-195 (SQAK…NLAS). The span at 21 to 36 (QPQPQPHQPQSPPNPP) shows a compositional bias: pro residues. The ALOG domain occupies 40 to 167 (RYESQKRRDW…ARGVPYKKRK (128 aa)). Basic residues predominate over residues 162 to 175 (PYKKRKKRKKRNPM). A Nuclear localization signal motif is present at residues 165–169 (KRKKR). Residues 184–195 (TTGTSSSSNLAS) are compositionally biased toward low complexity.

It belongs to the plant homeotic and developmental regulators ALOG protein family.

The protein localises to the nucleus. In terms of biological role, probable transcription regulator that acts as a developmental regulator by promoting cell growth in response to light. The sequence is that of Protein LIGHT-DEPENDENT SHORT HYPOCOTYLS 7 (LSH7) from Arabidopsis thaliana (Mouse-ear cress).